Reading from the N-terminus, the 632-residue chain is MAU2 chromatid cohesion factor homolog (632 aa).

2 TPR repeats span residues 453–486 (GGFY…ANAE) and 493–526 (SCSL…ASKI).

This sequence belongs to the SCC4/mau-2 family. As to quaternary structure, interacts with Nipped-B to form the cohesin loading complex.

It localises to the nucleus. Its subcellular location is the nucleoplasm. Required for association of the cohesin complex with chromatin during interphase. Plays a role in sister chromatid cohesion and normal progression through prometaphase. The protein is MAU2 chromatid cohesion factor homolog of Drosophila yakuba (Fruit fly).